Consider the following 84-residue polypeptide: Anthracycline acyl carrier protein DpsG (84 aa).

Positions 3-80 (ELSLAELREI…SMLIFVNERL (78 aa)) constitute a Carrier domain. The residue at position 40 (serine 40) is an O-(pantetheine 4'-phosphoryl)serine.

It functions in the pathway antibiotic biosynthesis; daunorubicin biosynthesis. The protein operates within antibiotic biosynthesis; carminomycin biosynthesis. Its pathway is antibiotic biosynthesis; rhodomycin biosynthesis. It participates in antibiotic biosynthesis; aclacinomycin biosynthesis. In terms of biological role, involved in the biosynthesis of aklanonate which is an important precursor common to the formation of the clinically significant anthracyclines such as carminomycin, daunorubicin (daunomycin), rhodomycin, aclacinomycin T (aklavin) and aclacinomycin A (aclarubicin). These compounds are aromatic polyketide antibiotics that exhibit high cytotoxicity and are widely applied in the chemotherapy of a variety of cancers. The chain is Anthracycline acyl carrier protein DpsG (dpsG) from Streptomyces peucetius.